Here is a 213-residue protein sequence, read N- to C-terminus: ATP synthase peripheral stalk subunit OSCP, mitochondrial (213 aa).

A mitochondrion-targeting transit peptide spans 1–23 (MAAPATSVLSRQVRSFSTSVVRP). The short motif at 5–23 (ATSVLSRQVRSFSTSVVRP) is the SIFI-degron element. Lysine 60, lysine 70, and lysine 73 each carry N6-acetyllysine. Lysine 90 carries the N6-succinyllysine modification. Lysine 100 and lysine 158 each carry N6-acetyllysine; alternate. N6-succinyllysine; alternate is present on residues lysine 100 and lysine 158. 2 positions are modified to N6-acetyllysine: lysine 176 and lysine 192. Lysine 199 carries the post-translational modification N6-succinyllysine.

Belongs to the ATPase delta chain family. In terms of assembly, component of the ATP synthase complex composed at least of ATP5F1A/subunit alpha, ATP5F1B/subunit beta, ATP5MC1/subunit c (homooctomer), MT-ATP6/subunit a, MT-ATP8/subunit 8, ATP5ME/subunit e, ATP5MF/subunit f, ATP5MG/subunit g, ATP5MK/subunit k, ATP5MJ/subunit j, ATP5F1C/subunit gamma, ATP5F1D/subunit delta, ATP5F1E/subunit epsilon, ATP5PF/subunit F6, ATP5PB/subunit b, ATP5PD/subunit d, ATP5PO/subunit OSCP. ATP synthase complex consists of a soluble F(1) head domain (subunits alpha(3) and beta(3)) - the catalytic core - and a membrane F(0) domain - the membrane proton channel (subunits c, a, 8, e, f, g, k and j). These two domains are linked by a central stalk (subunits gamma, delta, and epsilon) rotating inside the F1 region and a stationary peripheral stalk (subunits F6, b, d, and OSCP). In terms of processing, in response to mitochondrial stress, the precursor protein is ubiquitinated by the SIFI complex in the cytoplasm before mitochondrial import, leading to its degradation. Within the SIFI complex, UBR4 initiates ubiquitin chain that are further elongated or branched by KCMF1. In terms of tissue distribution, expressed by the principal cells of the epididymis. Detected in flagella of epididymal sperm (at protein level).

It localises to the mitochondrion. It is found in the mitochondrion inner membrane. Subunit OSCP, of the mitochondrial membrane ATP synthase complex (F(1)F(0) ATP synthase or Complex V) that produces ATP from ADP in the presence of a proton gradient across the membrane which is generated by electron transport complexes of the respiratory chain. ATP synthase complex consist of a soluble F(1) head domain - the catalytic core - and a membrane F(1) domain - the membrane proton channel. These two domains are linked by a central stalk rotating inside the F(1) region and a stationary peripheral stalk. During catalysis, ATP synthesis in the catalytic domain of F(1) is coupled via a rotary mechanism of the central stalk subunits to proton translocation. In vivo, can only synthesize ATP although its ATP hydrolase activity can be activated artificially in vitro. Part of the complex F(0) domain. Part of the complex F(0) domain and the peripheric stalk, which acts as a stator to hold the catalytic alpha(3)beta(3) subcomplex and subunit a/ATP6 static relative to the rotary elements. This is ATP synthase peripheral stalk subunit OSCP, mitochondrial from Rattus norvegicus (Rat).